A 262-amino-acid polypeptide reads, in one-letter code: ATP synthase subunit a (262 aa).

5 helical membrane-spanning segments follow: residues 25–45, 86–106, 130–150, 204–226, and 240–260; these read NVHIDTLFFSVLAAIIFLAVF, VAPLALTIFCWVFIMNAIDLI, DISATLGMSLCVFALILFYTV, LIFILIAVMYSANAAIAALGIPL, and LQAFIFMMLTVVYLSIAYNKA.

This sequence belongs to the ATPase A chain family. As to quaternary structure, F-type ATPases have 2 components, CF(1) - the catalytic core - and CF(0) - the membrane proton channel. CF(1) has five subunits: alpha(3), beta(3), gamma(1), delta(1), epsilon(1). CF(0) has three main subunits: a(1), b(2) and c(9-12). The alpha and beta chains form an alternating ring which encloses part of the gamma chain. CF(1) is attached to CF(0) by a central stalk formed by the gamma and epsilon chains, while a peripheral stalk is formed by the delta and b chains.

The protein resides in the cell inner membrane. Functionally, key component of the proton channel; it plays a direct role in the translocation of protons across the membrane. This Mannheimia succiniciproducens (strain KCTC 0769BP / MBEL55E) protein is ATP synthase subunit a.